Here is a 152-residue protein sequence, read N- to C-terminus: SsrA-binding protein (152 aa).

It belongs to the SmpB family.

It is found in the cytoplasm. In terms of biological role, required for rescue of stalled ribosomes mediated by trans-translation. Binds to transfer-messenger RNA (tmRNA), required for stable association of tmRNA with ribosomes. tmRNA and SmpB together mimic tRNA shape, replacing the anticodon stem-loop with SmpB. tmRNA is encoded by the ssrA gene; the 2 termini fold to resemble tRNA(Ala) and it encodes a 'tag peptide', a short internal open reading frame. During trans-translation Ala-aminoacylated tmRNA acts like a tRNA, entering the A-site of stalled ribosomes, displacing the stalled mRNA. The ribosome then switches to translate the ORF on the tmRNA; the nascent peptide is terminated with the 'tag peptide' encoded by the tmRNA and targeted for degradation. The ribosome is freed to recommence translation, which seems to be the essential function of trans-translation. This chain is SsrA-binding protein, found in Helicobacter acinonychis (strain Sheeba).